A 525-amino-acid chain; its full sequence is GMP synthase [glutamine-hydrolyzing] (525 aa).

The Glutamine amidotransferase type-1 domain occupies 9 to 207 (RILILDFGSQ…VRDICQCEAL (199 aa)). Cys-86 serves as the catalytic Nucleophile. Active-site residues include His-181 and Glu-183. In terms of domain architecture, GMPS ATP-PPase spans 208–400 (WTPAKIIDDA…LGLPYDMLYR (193 aa)). 235–241 (SGGVDSS) serves as a coordination point for ATP.

Homodimer.

It carries out the reaction XMP + L-glutamine + ATP + H2O = GMP + L-glutamate + AMP + diphosphate + 2 H(+). It functions in the pathway purine metabolism; GMP biosynthesis; GMP from XMP (L-Gln route): step 1/1. Catalyzes the synthesis of GMP from XMP. The chain is GMP synthase [glutamine-hydrolyzing] from Klebsiella pneumoniae subsp. pneumoniae (strain ATCC 700721 / MGH 78578).